Here is an 85-residue protein sequence, read N- to C-terminus: uncharacterized protein (85 aa).

Positions 44–85 are disordered; the sequence is EAHPSEHNGTVPRSLSQEWAKILAEEAEENSEENNDESEEDN. A compositionally biased stretch (polar residues) spans 50 to 60; it reads HNGTVPRSLSQ. Over residues 68-85 the composition is skewed to acidic residues; the sequence is EEAEENSEENNDESEEDN.

This is an uncharacterized protein from Haloarcula hispanica (His1V).